A 216-amino-acid chain; its full sequence is Ribosomal RNA small subunit methyltransferase G (216 aa).

S-adenosyl-L-methionine is bound by residues G73, L78, A124 to E125, and R139.

The protein belongs to the methyltransferase superfamily. RNA methyltransferase RsmG family.

It localises to the cytoplasm. Specifically methylates the N7 position of guanine in position 518 of 16S rRNA. This Pseudarthrobacter chlorophenolicus (strain ATCC 700700 / DSM 12829 / CIP 107037 / JCM 12360 / KCTC 9906 / NCIMB 13794 / A6) (Arthrobacter chlorophenolicus) protein is Ribosomal RNA small subunit methyltransferase G.